Consider the following 862-residue polypeptide: Rab GTPase-binding effector protein 1 (862 aa).

Position 2 is an N-acetylalanine (alanine 2). Residues 11 to 328 (DVSLQQRVAE…KDQEEDEQQR (318 aa)) adopt a coiled-coil conformation. Lysine 282 is subject to N6-acetyllysine. 2 disordered regions span residues 315-340 (ELKK…KIDT) and 355-374 (EESS…THGS). Serine 374, serine 377, and serine 407 each carry phosphoserine. Threonine 408 carries the post-translational modification Phosphothreonine. At serine 410 the chain carries Phosphoserine. Positions 534 to 816 (DMCSNYEKQL…LQTELDVSEQ (283 aa)) form a coiled coil.

The protein belongs to the rabaptin family. Heterodimer with RABGEF1. The heterodimer binds RAB4A and RAB5A that have been activated by GTP-binding. Interacts with TSC2. Interacts with GGA1 (via GAE domain), GGA2 (via GAE domain) and GGA3 (via GAE domain). Interacts with AP1G1 (via GAE domain). Interacts with AP1G2 (via GAE domain). Interacts with ECPAS. Interacts with KCNH1. Interacts with PKD1 (via C-terminal domain) and GGA1; the interactions recruit PKD1:PKD2 complex to GGA1 and ARL3 at trans-Golgi network. Interacts with KCNH1. Post-translationally, proteolytic cleavage by caspases in apoptotic cells causes loss of endosome fusion activity.

The protein localises to the cytoplasm. Its subcellular location is the early endosome. The protein resides in the recycling endosome. It is found in the cytoplasmic vesicle. Its function is as follows. Rab effector protein acting as linker between gamma-adaptin, RAB4A and RAB5A. Involved in endocytic membrane fusion and membrane trafficking of recycling endosomes. Involved in KCNH1 channels trafficking to and from the cell membrane. Stimulates RABGEF1 mediated nucleotide exchange on RAB5A. Mediates the traffic of PKD1:PKD2 complex from the endoplasmic reticulum through the Golgi to the cilium. This is Rab GTPase-binding effector protein 1 (Rabep1) from Rattus norvegicus (Rat).